A 139-amino-acid polypeptide reads, in one-letter code: Lysozyme (139 aa).

Residues 1–19 form the signal peptide; that stretch reads MTKYVILLAVLAFALHCDA. A C-type lysozyme domain is found at 20–139; that stretch reads KRFTRCGLVQ…QHGLPDISDC (120 aa). Intrachain disulfides connect cysteine 25-cysteine 139, cysteine 46-cysteine 129, cysteine 81-cysteine 95, and cysteine 91-cysteine 109. Catalysis depends on residues glutamate 51 and aspartate 69.

It belongs to the glycosyl hydrolase 22 family.

It catalyses the reaction Hydrolysis of (1-&gt;4)-beta-linkages between N-acetylmuramic acid and N-acetyl-D-glucosamine residues in a peptidoglycan and between N-acetyl-D-glucosamine residues in chitodextrins.. Lysozymes have primarily a bacteriolytic function; those in tissues and body fluids are associated with the monocyte-macrophage system and enhance the activity of immunoagents. In Hyalophora cecropia (Cecropia moth), this protein is Lysozyme.